We begin with the raw amino-acid sequence, 89 residues long: Small ribosomal subunit protein uS15 (89 aa).

It belongs to the universal ribosomal protein uS15 family. As to quaternary structure, part of the 30S ribosomal subunit. Forms a bridge to the 50S subunit in the 70S ribosome, contacting the 23S rRNA.

One of the primary rRNA binding proteins, it binds directly to 16S rRNA where it helps nucleate assembly of the platform of the 30S subunit by binding and bridging several RNA helices of the 16S rRNA. In terms of biological role, forms an intersubunit bridge (bridge B4) with the 23S rRNA of the 50S subunit in the ribosome. This Mycolicibacterium smegmatis (strain ATCC 700084 / mc(2)155) (Mycobacterium smegmatis) protein is Small ribosomal subunit protein uS15.